The primary structure comprises 346 residues: NADH-ubiquinone oxidoreductase chain 2 (346 aa).

11 consecutive transmembrane segments (helical) span residues 3 to 23 (PLIL…VMAS), 25 to 45 (HWLM…PILM), 59 to 79 (YFLT…INLM), 96 to 116 (IIMT…FWVP), 122 to 142 (ISLT…MSIL), 149 to 169 (INLN…GWGG), 178 to 198 (IMAY…VYNP), 200 to 220 (LTML…MLFI), 237 to 257 (APLI…LPPL), 274 to 294 (SSII…YFYM), and 322 to 342 (ITLL…TPML).

The protein belongs to the complex I subunit 2 family. As to quaternary structure, core subunit of respiratory chain NADH dehydrogenase (Complex I) which is composed of 45 different subunits. Interacts with TMEM242.

The protein localises to the mitochondrion inner membrane. The enzyme catalyses a ubiquinone + NADH + 5 H(+)(in) = a ubiquinol + NAD(+) + 4 H(+)(out). In terms of biological role, core subunit of the mitochondrial membrane respiratory chain NADH dehydrogenase (Complex I) which catalyzes electron transfer from NADH through the respiratory chain, using ubiquinone as an electron acceptor. Essential for the catalytic activity and assembly of complex I. This Equus asinus (Donkey) protein is NADH-ubiquinone oxidoreductase chain 2.